Consider the following 158-residue polypeptide: Inorganic pyrophosphatase (158 aa).

Residue E8 coordinates Mg(2+). Residues K16, R30, and Y42 each coordinate substrate. Residues D52, D57, D84, and D89 each coordinate Mg(2+). The active-site Proton acceptor is D89. Residue Y125 coordinates substrate.

Belongs to the PPase family. In terms of assembly, homohexamer. Requires Mg(2+) as cofactor.

The protein localises to the cytoplasm. It carries out the reaction diphosphate + H2O = 2 phosphate + H(+). Its function is as follows. Catalyzes the hydrolysis of inorganic pyrophosphate (PPi) forming two phosphate ions. The polypeptide is Inorganic pyrophosphatase (Corynebacterium efficiens (strain DSM 44549 / YS-314 / AJ 12310 / JCM 11189 / NBRC 100395)).